We begin with the raw amino-acid sequence, 421 residues long: eIF5-mimic protein 1 (421 aa).

Positions 1-24 (MNTGKQQKPVLTGQRFKTRKRDEK) are disordered. Residues 250–417 (TQQTLGTRKE…QNAEEESESE (168 aa)) form the W2 domain.

It belongs to the BZW family.

Its subcellular location is the cytoplasm. Functionally, translation initiation regulator which may repress non-AUG initiated translation and repeat-associated non-AUG (RAN) initiated translation by acting as a competitive inhibitor of eukaryotic translation initiation factor 5 (EIF5) function. This chain is eIF5-mimic protein 1 (bzw2), found in Danio rerio (Zebrafish).